The sequence spans 620 residues: Membralin (620 aa).

Residues 1-33 (MSEHVEPAAPGPGPNGGGGGPAPARGPRTPNLN) form a disordered region. Ser-2 is subject to N-acetylserine. Residues 22-31 (APARGPRTPN) are compositionally biased toward low complexity. A Phosphothreonine modification is found at Thr-29. The chain crosses the membrane as a helical span at residues 70 to 90 (FFVLLKALFVLFVLAYIHIVF). The N-linked (GlcNAc...) asparagine glycan is linked to Asn-189. 3 consecutive transmembrane segments (helical) span residues 302–322 (TSYL…SMLL), 346–366 (IAFP…MEAI), and 426–446 (YSSL…IYFF). Disordered regions lie at residues 474–517 (TPTA…GPVA) and 568–620 (SPLG…EVGS). Composition is skewed to low complexity over residues 499–517 (PPAL…GPVA) and 568–593 (SPLG…AASD).

Belongs to the membralin family. In terms of assembly, interacts with ERLIN2.

The protein localises to the endoplasmic reticulum membrane. May have a role in the ERAD pathway required for clearance of misfolded proteins in the endoplasmic reticulum (ER). Promotes survival of motor neurons, probably by protecting against ER stress. The polypeptide is Membralin (TMEM259) (Homo sapiens (Human)).